The chain runs to 181 residues: Histone deacetylase complex subunit SAP30L (181 aa).

Residues Cys26 to His74 form an Atypical zinc finger. Residues Arg82 to Val103 form a disordered region. The Nuclear localization signal (NLS) signature appears at Asn83–Lys88. The important for DNA and phosphoinositide binding stretch occupies residues Arg85–Arg87.

It belongs to the SAP30 family. As to quaternary structure, interacts with components of the histone deacetylase complex sin3a, hdac1 and hdac2. Binds histones and nucleosomes.

It localises to the nucleus. It is found in the nucleolus. Functionally, functions as a transcription repressor, probably via its interaction with histone deacetylase complexes. Involved in the functional recruitment of the class 1 Sin3-histone deacetylase complex (HDAC) to the nucleolus. Binds DNA, apparently without sequence-specificity, and bends bound double-stranded DNA. Binds phosphoinositol phosphates (phosphoinositol 3-phosphate, phosphoinositol 4-phosphate and phosphoinositol 5-phosphate) via the same basic sequence motif that mediates DNA binding and nuclear import. The polypeptide is Histone deacetylase complex subunit SAP30L (sap30l) (Xenopus tropicalis (Western clawed frog)).